We begin with the raw amino-acid sequence, 137 residues long: Small heat shock protein IbpA (137 aa).

In terms of domain architecture, sHSP spans 28–137 (SQGNGGYPPY…TLKPRRIEIK (110 aa)).

It belongs to the small heat shock protein (HSP20) family. In terms of assembly, monomer. Forms homomultimers of about 100-150 subunits at optimal growth temperatures. Conformation changes to monomers at high temperatures or high ionic concentrations.

It localises to the cytoplasm. Its function is as follows. Associates with aggregated proteins, together with IbpB, to stabilize and protect them from irreversible denaturation and extensive proteolysis during heat shock and oxidative stress. Aggregated proteins bound to the IbpAB complex are more efficiently refolded and reactivated by the ATP-dependent chaperone systems ClpB and DnaK/DnaJ/GrpE. Its activity is ATP-independent. This is Small heat shock protein IbpA from Serratia proteamaculans (strain 568).